The chain runs to 1149 residues: Beta-alanine-activating enzyme (1149 aa).

ATP contacts are provided by residues 178 to 186 (TSGTTGLPK), Asp-408, Arg-422, and Lys-543. A Carrier domain is found at 570–646 (ASVRLKLQNL…DLLSHIMTET (77 aa)). Residue Ser-605 is modified to O-(pantetheine 4'-phosphoryl)serine. The interval 653–683 (PSKKRTADYSDSEASGKRQHKEMTTSSDTES) is disordered.

The protein belongs to the ATP-dependent AMP-binding enzyme family.

In terms of biological role, covalently binds beta-alanine in an ATP-dependent manner to form a thioester bond with its phosphopantetheine group and transfers it to an, as yet, unknown acceptor. May be required for a post-translational protein modification or for post-transcriptional modification of an RNA. In Danio rerio (Zebrafish), this protein is Beta-alanine-activating enzyme (aasdh).